The primary structure comprises 269 residues: uncharacterized protein (269 aa).

In terms of domain architecture, HTH gntR-type spans 5-73 (APKWRELADR…RGHGTVVRRK (69 aa)). A DNA-binding region (H-T-H motif) is located at residues 33 to 52 (IRDLVEAGEGSKETVHRAYK).

In terms of biological role, the imp locus inhibits the extrachromosomal maintenance of the Streptomyces plasmid SLP1. This is an uncharacterized protein from Streptomyces coelicolor (strain ATCC BAA-471 / A3(2) / M145).